We begin with the raw amino-acid sequence, 487 residues long: N-succinylglutamate 5-semialdehyde dehydrogenase (487 aa).

Residue 221-226 (GSSDTG) coordinates NAD(+). Residues glutamate 244 and cysteine 278 contribute to the active site.

This sequence belongs to the aldehyde dehydrogenase family. AstD subfamily.

The catalysed reaction is N-succinyl-L-glutamate 5-semialdehyde + NAD(+) + H2O = N-succinyl-L-glutamate + NADH + 2 H(+). The protein operates within amino-acid degradation; L-arginine degradation via AST pathway; L-glutamate and succinate from L-arginine: step 4/5. Functionally, catalyzes the NAD-dependent reduction of succinylglutamate semialdehyde into succinylglutamate. In Burkholderia orbicola (strain MC0-3), this protein is N-succinylglutamate 5-semialdehyde dehydrogenase.